Here is a 251-residue protein sequence, read N- to C-terminus: Protein FAM216A (251 aa).

The segment covering 1 to 16 (MPNQGPVSDWTECSSS) has biased composition (polar residues). A disordered region spans residues 1-49 (MPNQGPVSDWTECSSSAEPPAVARAEGGGGGSAGHSYYQNSKDRIKDGH).

Belongs to the FAM216 family.

This Bos taurus (Bovine) protein is Protein FAM216A (FAM216A).